The primary structure comprises 404 residues: MHTKDIKKIVLAYSGGLDTSAIIPWLKEHYGNCEVVAFVADVGQSREDLEGVEQKALRSGASECHVVDLREEFIKDYVYPVLKTGALYEGSYLLGTSMARPIIAKAQVELALKVGADALAHGATGKGNDQVRFESTYTALAPQLKVVAPWREWDLRSREALLDYLKARDIPTTATLEKIYSRDENAWHISTEGGVLESTWNASNKDCWVWTVDPEEAPDEAELVSVMIEKGEVVGVNGKVMSPYQCLEALNILGVKHGIGRIDIVENRLVGMKSRGCYETPGGTIMMAALRGVEQLVLDRDSFKWRQQLGLEMSYVVYDGRWFAPLRRSIQAAAETLAADVSGEVVLKLYKGQVTAIQKRSTNSLYSEAFATFGEDEVYDHSHAAGFIRLYSLPSRIRALNSKE.

Residues 12-20 (AYSGGLDTS) and A40 each bind ATP. Y92 and S97 together coordinate L-citrulline. G122 contacts ATP. L-aspartate-binding residues include T124, N128, and D129. N128 is a binding site for L-citrulline. Residues R132, S181, S190, E266, and Y278 each coordinate L-citrulline.

It belongs to the argininosuccinate synthase family. Type 1 subfamily. Homotetramer.

It localises to the cytoplasm. The enzyme catalyses L-citrulline + L-aspartate + ATP = 2-(N(omega)-L-arginino)succinate + AMP + diphosphate + H(+). It participates in amino-acid biosynthesis; L-arginine biosynthesis; L-arginine from L-ornithine and carbamoyl phosphate: step 2/3. The chain is Argininosuccinate synthase from Photorhabdus laumondii subsp. laumondii (strain DSM 15139 / CIP 105565 / TT01) (Photorhabdus luminescens subsp. laumondii).